Here is a 163-residue protein sequence, read N- to C-terminus: Putative pre-16S rRNA nuclease (163 aa).

The protein belongs to the YqgF nuclease family.

It localises to the cytoplasm. Functionally, could be a nuclease involved in processing of the 5'-end of pre-16S rRNA. The polypeptide is Putative pre-16S rRNA nuclease (Nitrobacter winogradskyi (strain ATCC 25391 / DSM 10237 / CIP 104748 / NCIMB 11846 / Nb-255)).